A 113-amino-acid polypeptide reads, in one-letter code: MKTFAGFSFLFLWLQLDCMSRGEDVEQSLFLSVREGDSSVINCTYTDSSSTYLYWYKQEPGAGLQLLTYIFSNMDMKQDQRLTVLLNKKDKHLSLRIADTQTGDSAIYFCAES.

Positions 1–22 (MKTFAGFSFLFLWLQLDCMSRG) are cleaved as a signal peptide. Positions 23-113 (EDVEQSLFLS…DSAIYFCAES (91 aa)) constitute an Ig-like domain. An N-linked (GlcNAc...) asparagine glycan is attached at N42. A disulfide bridge connects residues C43 and C110.

As to quaternary structure, alpha-beta TR is a heterodimer composed of an alpha and beta chain; disulfide-linked. The alpha-beta TR is associated with the transmembrane signaling CD3 coreceptor proteins to form the TR-CD3 (TcR or TCR). The assembly of alpha-beta TR heterodimers with CD3 occurs in the endoplasmic reticulum where a single alpha-beta TR heterodimer associates with one CD3D-CD3E heterodimer, one CD3G-CD3E heterodimer and one CD247 homodimer forming a stable octameric structure. CD3D-CD3E and CD3G-CD3E heterodimers preferentially associate with TR alpha and TR beta chains, respectively. The association of the CD247 homodimer is the last step of TcR assembly in the endoplasmic reticulum and is required for transport to the cell surface.

Its subcellular location is the cell membrane. V region of the variable domain of T cell receptor (TR) alpha chain that participates in the antigen recognition. Alpha-beta T cell receptors are antigen specific receptors which are essential to the immune response and are present on the cell surface of T lymphocytes. Recognize peptide-major histocompatibility (MH) (pMH) complexes that are displayed by antigen presenting cells (APC), a prerequisite for efficient T cell adaptive immunity against pathogens. Binding of alpha-beta TR to pMH complex initiates TR-CD3 clustering on the cell surface and intracellular activation of LCK that phosphorylates the ITAM motifs of CD3G, CD3D, CD3E and CD247 enabling the recruitment of ZAP70. In turn ZAP70 phosphorylates LAT, which recruits numerous signaling molecules to form the LAT signalosome. The LAT signalosome propagates signal branching to three major signaling pathways, the calcium, the mitogen-activated protein kinase (MAPK) kinase and the nuclear factor NF-kappa-B (NF-kB) pathways, leading to the mobilization of transcription factors that are critical for gene expression and essential for T cell growth and differentiation. The T cell repertoire is generated in the thymus, by V-(D)-J rearrangement. This repertoire is then shaped by intrathymic selection events to generate a peripheral T cell pool of self-MH restricted, non-autoaggressive T cells. Post-thymic interaction of alpha-beta TR with the pMH complexes shapes TR structural and functional avidity. This is T cell receptor alpha variable 5 from Homo sapiens (Human).